An 89-amino-acid polypeptide reads, in one-letter code: Small ribosomal subunit protein uS15 (89 aa).

It belongs to the universal ribosomal protein uS15 family. In terms of assembly, part of the 30S ribosomal subunit. Forms a bridge to the 50S subunit in the 70S ribosome, contacting the 23S rRNA.

One of the primary rRNA binding proteins, it binds directly to 16S rRNA where it helps nucleate assembly of the platform of the 30S subunit by binding and bridging several RNA helices of the 16S rRNA. In terms of biological role, forms an intersubunit bridge (bridge B4) with the 23S rRNA of the 50S subunit in the ribosome. The sequence is that of Small ribosomal subunit protein uS15 from Xanthobacter autotrophicus (strain ATCC BAA-1158 / Py2).